The following is a 317-amino-acid chain: Urease accessory protein 6 (317 aa).

This sequence belongs to the UreF family. As to quaternary structure, URE4, URE6 and URE7 may form a complex that acts as a GTP-hydrolysis-dependent molecular chaperone, activating the urease apoprotein URE1.

Urease accessory protein required for the maturation and activation of urease via the functional incorporation of the urease nickel metallocenter. Plays a role in host brain invasion. The chain is Urease accessory protein 6 from Cryptococcus neoformans var. grubii serotype A (strain H99 / ATCC 208821 / CBS 10515 / FGSC 9487) (Filobasidiella neoformans var. grubii).